Consider the following 1347-residue polypeptide: Spermatogenesis-associated protein 31A1 (1347 aa).

The chain crosses the membrane as a helical span at residues 23–43 (PWVLDIFLTLVFALGFFFLLL). 6 disordered regions span residues 55–89 (PSPSPGKRKCPVGRRRRPRGRMKNHSLRAGRECPR), 106–235 (GPHL…STLI), 373–397 (EQDTTNPKPFWNMGENSKQLPGPQK), 628–658 (DESPGTSQAKGKPSPWQSSMSTGESSKEAQK), 899–955 (PRGI…REAV), and 1085–1160 (HEEP…PPSV). A compositionally biased stretch (basic residues) spans 60–82 (GKRKCPVGRRRRPRGRMKNHSLR). Positions 165–178 (LASTPSPGPMTTSV) are enriched in polar residues. Residues 198-222 (PEPPALFPHPPHTPDPLACSPPPPK) show a composition bias toward pro residues. Polar residues-rich tracts occupy residues 631 to 651 (PGTSQAKGKPSPWQSSMSTGE) and 927 to 948 (LTYSLTGSTQQSRSLGAQSSKA). Basic and acidic residues-rich tracts occupy residues 1108 to 1127 (HKSEKSRKPNLEKHEERLEG) and 1137 to 1146 (RKTEDTHQDE).

The protein belongs to the SPATA31 family.

It is found in the membrane. May play a role in spermatogenesis. This chain is Spermatogenesis-associated protein 31A1, found in Homo sapiens (Human).